The chain runs to 115 residues: NADH-ubiquinone oxidoreductase chain 3 (115 aa).

The next 3 membrane-spanning stretches (helical) occupy residues 3–23, 55–75, and 84–104; these read LLMALFIDASLSLILISIAFW, FFLVAITFLLFDLEIALLLPL, and LSAMMVTSFILISVLALGLMY.

The protein belongs to the complex I subunit 3 family. In terms of assembly, core subunit of respiratory chain NADH dehydrogenase (Complex I) which is composed of 45 different subunits. Interacts with TMEM186. Interacts with TMEM242.

It localises to the mitochondrion inner membrane. The catalysed reaction is a ubiquinone + NADH + 5 H(+)(in) = a ubiquinol + NAD(+) + 4 H(+)(out). In terms of biological role, core subunit of the mitochondrial membrane respiratory chain NADH dehydrogenase (Complex I) which catalyzes electron transfer from NADH through the respiratory chain, using ubiquinone as an electron acceptor. Essential for the catalytic activity of complex I. In Sigmodon ochrognathus (Yellow-nosed cotton rat), this protein is NADH-ubiquinone oxidoreductase chain 3.